A 90-amino-acid polypeptide reads, in one-letter code: MAVRIRLKRMGAKKKPFYRIVVADSRSPRDGRFIETIGTYNPITEPAEIKIDEELALKWLQNGAKPSDTVRNLLSKQGILEKFHNLKYGK.

It belongs to the bacterial ribosomal protein bS16 family.

The chain is Small ribosomal subunit protein bS16 from Geobacillus sp. (strain WCH70).